Reading from the N-terminus, the 387-residue chain is Aminodeoxyfutalosine deaminase (387 aa).

Basic and acidic residues predominate over residues 1-10 (MRPAYDDPRT). The tract at residues 1–37 (MRPAYDDPRTTDQPITRARPPPRAARGRRLGEEPLTE) is disordered. 2 residues coordinate Zn(2+): histidine 61 and histidine 63. 3 residues coordinate substrate: arginine 116, aspartate 183, and glycine 217. Position 244 (histidine 244) interacts with Zn(2+). Catalysis depends on glutamate 247, which acts as the Proton donor. A Zn(2+)-binding site is contributed by aspartate 325.

The protein belongs to the metallo-dependent hydrolases superfamily. Adenosine and AMP deaminases family. Zn(2+) serves as cofactor.

The enzyme catalyses 6-amino-6-deoxyfutalosine + H2O + H(+) = futalosine + NH4(+). Its pathway is quinol/quinone metabolism; menaquinone biosynthesis. Catalyzes the deamination of aminodeoxyfutalosine (AFL) into futalosine (FL), a step in the biosynthesis of menaquinone (MK, vitamin K2). In Streptomyces coelicolor (strain ATCC BAA-471 / A3(2) / M145), this protein is Aminodeoxyfutalosine deaminase.